Consider the following 471-residue polypeptide: MKRTLFDKIWDAHVVDRLEDGTCILYIDRHLVHEVTSPQAFEGLRMAGRLVRRPDATIAVVDHNVPTSDRRAGIQEPESRLQVETLQKNVAEFGVPYFDLLDVRQGIVHVVGPEQGISLPGFTIVCGDSHTSTHGALGALAFGIGTSEVEHVLATQTLLQKPAKNMLVEVRGKMPPGTTAKDMILAIIGKIGTAGGNGHVIEYAGEAVRALDMAGRMTICNMSIEAGARAGLVAPDDVTFEWLRGRPFAPQGEDFDRAVEYWRSLASDEGAHYDRVVVLEASEIVPMVTWGTSPEDVVRIDGTVPDPDRATDEARRTQMRRMLDYMDLKPGASIADLPVDVVFIGSCTNSRIEDLRSAAAIARGRHVADGVRALVVPGSGIVRQQAEQEGLDRIFLEAGFEWREPGCSMCLGMNPDKLTPGQRCASTSNRNFEGRQGPGGRTHLLSPAMAAAAAVTGKLTDVRTLNVEETV.

Positions 347, 407, and 410 each coordinate [4Fe-4S] cluster.

The protein belongs to the aconitase/IPM isomerase family. LeuC type 1 subfamily. As to quaternary structure, heterodimer of LeuC and LeuD. [4Fe-4S] cluster is required as a cofactor.

The enzyme catalyses (2R,3S)-3-isopropylmalate = (2S)-2-isopropylmalate. It participates in amino-acid biosynthesis; L-leucine biosynthesis; L-leucine from 3-methyl-2-oxobutanoate: step 2/4. In terms of biological role, catalyzes the isomerization between 2-isopropylmalate and 3-isopropylmalate, via the formation of 2-isopropylmaleate. This Granulibacter bethesdensis (strain ATCC BAA-1260 / CGDNIH1) protein is 3-isopropylmalate dehydratase large subunit.